Here is a 309-residue protein sequence, read N- to C-terminus: DNA-directed RNA polymerase subunit alpha (309 aa).

The alpha N-terminal domain (alpha-NTD) stretch occupies residues 1 to 225; the sequence is MFQVQCLESA…SLFKLVNSAD (225 aa). The segment at 237–309 is alpha C-terminal domain (alpha-CTD); that stretch reads IVQVSQTDVT…LHERFNLTLN (73 aa).

It belongs to the RNA polymerase alpha chain family. In terms of assembly, in plastids the minimal PEP RNA polymerase catalytic core is composed of four subunits: alpha, beta, beta', and beta''. When a (nuclear-encoded) sigma factor is associated with the core the holoenzyme is formed, which can initiate transcription.

It is found in the plastid. It localises to the chloroplast. It catalyses the reaction RNA(n) + a ribonucleoside 5'-triphosphate = RNA(n+1) + diphosphate. In terms of biological role, DNA-dependent RNA polymerase catalyzes the transcription of DNA into RNA using the four ribonucleoside triphosphates as substrates. This Emiliania huxleyi (Coccolithophore) protein is DNA-directed RNA polymerase subunit alpha.